The sequence spans 357 residues: Alanine racemase (357 aa).

Lys33 (proton acceptor; specific for D-alanine) is an active-site residue. At Lys33 the chain carries N6-(pyridoxal phosphate)lysine. Arg129 is a binding site for substrate. The Proton acceptor; specific for L-alanine role is filled by Tyr253. Position 301 (Met301) interacts with substrate.

This sequence belongs to the alanine racemase family. Homodimer. Pyridoxal 5'-phosphate serves as cofactor.

It catalyses the reaction L-alanine = D-alanine. It functions in the pathway amino-acid biosynthesis; D-alanine biosynthesis; D-alanine from L-alanine: step 1/1. Functionally, catalyzes the interconversion of L-alanine and D-alanine. Is highly specific for alanine as substrate. May serve both anabolic and catabolic purposes. This is Alanine racemase from Pseudomonas taetrolens.